The primary structure comprises 212 residues: MKIRLSITIILLSYTVATVAGQQCGRQGGGRTCPGNICCSQYGYCGTTADYCSPTNNCQSNCWGSGPSGPGESASNVRATYHFYNPAQNNWDLRAVSAYCSTWDADKPYAWRSKYGWTAFCGPAGPRGQASCGKCLRVKNTRTNAAVTVRIVDQCSNGGLDLDVAMFNQIDTDGFGYQQGHLIVDYQFVDCGNELIGQPDSRNMLVSAIDRV.

An N-terminal signal peptide occupies residues 1–21; that stretch reads MKIRLSITIILLSYTVATVAG. The region spanning 22 to 64 is the Chitin-binding type-1 domain; that stretch reads QQCGRQGGGRTCPGNICCSQYGYCGTTADYCSPTNNCQSNCWG. Disulfide bonds link C24/C39, C33/C45, C38/C52, C58/C62, C100/C132, C121/C155, and C135/C191. In terms of domain architecture, Barwin spans 72–193; sequence ESASNVRATY…VDYQFVDCGN (122 aa).

In terms of assembly, CB-HEL interacts strongly with a fungal fruiting body lectin.

Its subcellular location is the vacuole. In terms of biological role, fungal growth inhibitors. Neither CB-HEL nor CD-HEL have chitinase activity, but both have antimicrobial activities. CD-HEL has RNase, but no DNase activity. This is Hevein-like preproprotein (HEL) from Arabidopsis thaliana (Mouse-ear cress).